Reading from the N-terminus, the 298-residue chain is Cytosolic Fe-S cluster assembly factor CFD1 (298 aa).

25–32 (GKGGVGKS) contacts ATP. Residues cysteine 215 and cysteine 218 each coordinate [4Fe-4S] cluster.

It belongs to the Mrp/NBP35 ATP-binding proteins family. NUBP2/CFD1 subfamily. In terms of assembly, heterotetramer of 2 NBP35 and 2 CFD1 chains. It depends on [4Fe-4S] cluster as a cofactor.

It localises to the cytoplasm. Functionally, component of the cytosolic iron-sulfur (Fe/S) protein assembly (CIA) machinery. Required for maturation of extramitochondrial Fe-S proteins. The NBP35-CFD1 heterotetramer forms a Fe-S scaffold complex, mediating the de novo assembly of an Fe-S cluster and its transfer to target apoproteins. Required for biogenesis and export of both ribosomal subunits, which may reflect a role in assembly of the Fe/S clusters in RLI1, a protein which performs rRNA processing and ribosome export. The polypeptide is Cytosolic Fe-S cluster assembly factor CFD1 (Debaryomyces hansenii (strain ATCC 36239 / CBS 767 / BCRC 21394 / JCM 1990 / NBRC 0083 / IGC 2968) (Yeast)).